The following is a 236-amino-acid chain: Small ribosomal subunit protein uS2c (236 aa).

This sequence belongs to the universal ribosomal protein uS2 family.

It localises to the plastid. It is found in the chloroplast. The polypeptide is Small ribosomal subunit protein uS2c (rps2) (Helianthus annuus (Common sunflower)).